The chain runs to 303 residues: MIEELAGIDIRINEPLKKYTYTKVGGPADYLVFPRNRLELTRVVKYANNHSIPWIVLGNASNLIVRDGGIRGFVIMFNKLNTVTVDGYTIEAEAGANLIETTKVAKFHSLTGFEFACGIPGSVGGAIFMNAGAYGGEIANIFLSAKVLTPEGDIKTMTAREMAFGYRHSAIQKSGDIVISAKFALKPGDFEQISQEMNRLNYLRQLKQPLEYPSCGSVFKRPEGHFAGQLIMEAKLKGYRIGGVEVSEKHAGFMINVDHGTAKDYEHLIAHVIETVEHNSGIRLEREVRIIGEQESLNQKEKS.

One can recognise an FAD-binding PCMH-type domain in the interval 23-188 (KVGGPADYLV…ISAKFALKPG (166 aa)). The active site involves Arg167. The active-site Proton donor is Ser217. The active site involves Glu287.

It belongs to the MurB family. FAD is required as a cofactor.

Its subcellular location is the cytoplasm. It carries out the reaction UDP-N-acetyl-alpha-D-muramate + NADP(+) = UDP-N-acetyl-3-O-(1-carboxyvinyl)-alpha-D-glucosamine + NADPH + H(+). It functions in the pathway cell wall biogenesis; peptidoglycan biosynthesis. In terms of biological role, cell wall formation. This is UDP-N-acetylenolpyruvoylglucosamine reductase from Streptococcus uberis (strain ATCC BAA-854 / 0140J).